Reading from the N-terminus, the 204-residue chain is Peptide deformylase (204 aa).

Cysteine 131 and histidine 174 together coordinate Fe cation. Glutamate 175 is a catalytic residue. Histidine 178 lines the Fe cation pocket.

Belongs to the polypeptide deformylase family. The cofactor is Fe(2+).

It carries out the reaction N-terminal N-formyl-L-methionyl-[peptide] + H2O = N-terminal L-methionyl-[peptide] + formate. Its function is as follows. Removes the formyl group from the N-terminal Met of newly synthesized proteins. Requires at least a dipeptide for an efficient rate of reaction. N-terminal L-methionine is a prerequisite for activity but the enzyme has broad specificity at other positions. In Streptococcus gordonii (strain Challis / ATCC 35105 / BCRC 15272 / CH1 / DL1 / V288), this protein is Peptide deformylase.